The chain runs to 510 residues: MFWLGFGLLLLALSLYLLYVFERQSRIDRLTHKWPAPPALPFIGHLHILAKLVGPHPLRRATEMINEHLHDHRAKLWMGTKLYLVDCNPKDIQALCSAQQLLQKTNDYRVFENWLCEGLFTSGFEKWSHRRKIVMPAFNYTMIKQFVAVFEKQSRILLTNVAKFAESGDQIDFLQLISCFTLDTICETALGVSVGSQSSAKSEYLDAVKSILVIIDKRLKNIFYRNSFIFKRTSHYKREQELIKTLHGFTEGIIQKRIDEINQDAENRNYQSSDAELDGVKRTLCFLDTLLLSKGPDGKPLTVKDIREEVDTIIFGGFDLTATTLNFFMYNMTLHPEHQQRCREEVWSVCGKDKSEPISIEQVRQLEFLEACIKETLRMYPSGPLTARKATANCTINDFFIPKGSDVIISPIYMGRCKDFFPDPMVFKPDRWAIGAEPKIEATTFIPFMAGARSCMGQRYAMVMLKMVLAHLLRNFLFEPLGERQVKLKLNFVITLHTVEPYLCRAKNLD.

Heme is bound at residue C455.

It belongs to the cytochrome P450 family. Requires heme as cofactor.

Its subcellular location is the endoplasmic reticulum membrane. The protein localises to the microsome membrane. Functionally, may be involved in the metabolism of insect hormones and in the breakdown of synthetic insecticides. In Drosophila melanogaster (Fruit fly), this protein is Probable cytochrome P450 312a1 (Cyp312a1).